The sequence spans 724 residues: MNRGPPNPRMFKFQPNPKVKNRFQDEADLRSLRSFKTDFSNYLASDTNFLNVAEIMTSYAYGESNNANEKEIQCDLLTENGGIEIDPTRLSYRERIRWHLQQFCYKTSSHGIPMLGQAPNSLYRAVWVFLLLICAIQFINQAVAVIQKYQKMDKITDIQLKFDTAPFPAITLCNLNPYKDSVIRSHDSISKILGVFKSVMKKAGDSSAEASDDGVEYDMDGITIQAKRRKRGAGEKGTFEPANSACECDEEDGSNECEEKSTEKPSSDNDMCICAFDRQTNDAWPCHRREQWTNTTCQACDEHYLCSKKAKKGTKRSEIKKEPCICESKGLFCIKHEHAALVLNLWEYFGDTEEFSDISTEEREALGFGNMTDEVAIVTKAKENIIFAMSASEEQRILMSQAKHNLIHKCSFNGKPCDIDKDFELVADPTFGNCFVFNHDREIFKSSVRAGPQYGLRVMLFVNASDYLPTSEAVGIRLTIHDKDDFPFPDTFGYSAPTGYISSFGMRMKKMSRLPAPYGDCVEDGTTSNYIYKGYAYSTEGCYRTCFQELIIDRCGCSDPRFPSIGGVQPCQVFNKNHRECLEKHTHQIGEIHGSFKCRCQQPCNQTIYTTSYSEAIWPSQALNISLGHCEKEAEECNEEYKENAAMLEVFYEALNFEVLAESEAYGIVKMMADFGGHLGLWSGVSVMTCCEFVCLVLELLYMAVTHHITQERIRRRENAANEF.

Residues 1–125 (MNRGPPNPRM…GQAPNSLYRA (125 aa)) lie on the Cytoplasmic side of the membrane. The helical transmembrane segment at 126 to 146 (VWVFLLLICAIQFINQAVAVI) threads the bilayer. Over 147 to 684 (QKYQKMDKIT…FGGHLGLWSG (538 aa)) the chain is Extracellular. N-linked (GlcNAc...) asparagine glycans are attached at residues Asn294, Asn370, Asn463, Asn605, and Asn624. The chain crosses the membrane as a helical span at residues 685–705 (VSVMTCCEFVCLVLELLYMAV). Residues 706–724 (THHITQERIRRRENAANEF) lie on the Cytoplasmic side of the membrane.

Belongs to the amiloride-sensitive sodium channel (TC 1.A.6) family. As to quaternary structure, the channel is probably composed of at least the mec-2, mec-4, mec-6 and mec-10 subunits.

It localises to the cell membrane. In terms of biological role, amiloride-sensitive sodium channel subunit required for mechanosensory transduction (touch sensitivity). Negatively regulates the turning step of male mating behavior. This is Degenerin mec-10 from Caenorhabditis briggsae.